Reading from the N-terminus, the 282-residue chain is ATP phosphoribosyltransferase (282 aa).

The protein belongs to the ATP phosphoribosyltransferase family. Long subfamily. Requires Mg(2+) as cofactor.

Its subcellular location is the cytoplasm. It catalyses the reaction 1-(5-phospho-beta-D-ribosyl)-ATP + diphosphate = 5-phospho-alpha-D-ribose 1-diphosphate + ATP. The protein operates within amino-acid biosynthesis; L-histidine biosynthesis; L-histidine from 5-phospho-alpha-D-ribose 1-diphosphate: step 1/9. Feedback inhibited by histidine. Its function is as follows. Catalyzes the condensation of ATP and 5-phosphoribose 1-diphosphate to form N'-(5'-phosphoribosyl)-ATP (PR-ATP). Has a crucial role in the pathway because the rate of histidine biosynthesis seems to be controlled primarily by regulation of HisG enzymatic activity. This is ATP phosphoribosyltransferase from Pyrobaculum neutrophilum (strain DSM 2338 / JCM 9278 / NBRC 100436 / V24Sta) (Thermoproteus neutrophilus).